Reading from the N-terminus, the 79-residue chain is Conotoxin ArMSGL-0123 (79 aa).

Residues 1–20 (MSRLGIMVLTLLLLVFIVTS) form the signal peptide. Positions 21-44 (HQDAGEKQATKRAAVNFRWRRSFT) are excised as a propeptide. 3 disulfides stabilise this stretch: cysteine 52–cysteine 64, cysteine 56–cysteine 73, and cysteine 63–cysteine 77. Position 78 is a leucine amide (leucine 78).

This sequence belongs to the conotoxin O3 superfamily. As to expression, expressed by the venom duct.

It is found in the secreted. The polypeptide is Conotoxin ArMSGL-0123 (Conus arenatus (Sand-dusted cone)).